A 277-amino-acid chain; its full sequence is Photosystem I assembly factor PSA3, chloroplastic (277 aa).

The transit peptide at 1–45 (MVVVTHISTSFHQISPSFFHLRLRNPSTTSSSRPKLDGGFALSIR) directs the protein to the chloroplast.

As to quaternary structure, interacts with PYG7.

Its subcellular location is the plastid. The protein localises to the chloroplast. The protein resides in the chloroplast thylakoid membrane. In terms of biological role, nuclear genome-encoded factor required for the accumulation of photosystem I (PSI). Functions as a PSI biogenesis factor. Cooperates with PYG7 to promote the stable assembly of PSI in the thylakoid membrane. May target primarily the PsaC subunit. Does not seem to be required for the expression of chloroplast genes encoding PSI subunits. The protein is Photosystem I assembly factor PSA3, chloroplastic of Arabidopsis thaliana (Mouse-ear cress).